We begin with the raw amino-acid sequence, 24 residues long: Small ribosomal subunit protein uS5 (24 aa).

This sequence belongs to the universal ribosomal protein uS5 family. In terms of assembly, part of the 30S ribosomal subunit. Contacts proteins S4 and S8.

Its function is as follows. With S4 and S12 plays an important role in translational accuracy. Located at the back of the 30S subunit body where it stabilizes the conformation of the head with respect to the body. The chain is Small ribosomal subunit protein uS5 (rpsE) from Vibrio proteolyticus (Aeromonas proteolytica).